Consider the following 52-residue polypeptide: Sperm protamine P1 (52 aa).

Residues Met1–Arg27 are disordered. Residues Ser9–Arg27 are compositionally biased toward basic residues.

Belongs to the protamine P1 family. Testis.

The protein localises to the nucleus. Its subcellular location is the chromosome. In terms of biological role, protamines substitute for histones in the chromatin of sperm during the haploid phase of spermatogenesis. They compact sperm DNA into a highly condensed, stable and inactive complex. This is Sperm protamine P1 (PRM1) from Rhinolophus ferrumequinum (Greater horseshoe bat).